Consider the following 121-residue polypeptide: MARIAGVDIPRDKRVVISLTYIFGIGRTTAQQILKEAGVSEDTRVRDLTEEELGKIRDVIDKLKVEGDLRREVSLNIKRLIEIGSYRGIRHRRGLPVRGQNTKNNARTRKGPRRTVANKKK.

A disordered region spans residues 93-121 (RGLPVRGQNTKNNARTRKGPRRTVANKKK). The segment covering 106–121 (ARTRKGPRRTVANKKK) has biased composition (basic residues).

Belongs to the universal ribosomal protein uS13 family. As to quaternary structure, part of the 30S ribosomal subunit. Forms a loose heterodimer with protein S19. Forms two bridges to the 50S subunit in the 70S ribosome.

Located at the top of the head of the 30S subunit, it contacts several helices of the 16S rRNA. In the 70S ribosome it contacts the 23S rRNA (bridge B1a) and protein L5 of the 50S subunit (bridge B1b), connecting the 2 subunits; these bridges are implicated in subunit movement. Contacts the tRNAs in the A and P-sites. The protein is Small ribosomal subunit protein uS13 of Bacillus licheniformis (strain ATCC 14580 / DSM 13 / JCM 2505 / CCUG 7422 / NBRC 12200 / NCIMB 9375 / NCTC 10341 / NRRL NRS-1264 / Gibson 46).